We begin with the raw amino-acid sequence, 365 residues long: Carbamoyl phosphate synthase small chain (365 aa).

CPSase stretches follow at residues 1–166 (MKRQ…PSPG) and 1–169 (MKRQ…GRGH). 3 residues coordinate L-glutamine: Ser-45, Gly-218, and Gly-220. One can recognise a Glutamine amidotransferase type-1 domain in the interval 170–357 (RVVLVDFGMK…LTMIENFKKE (188 aa)). Cys-245 (nucleophile) is an active-site residue. Leu-246, Gln-249, Asn-287, Gly-289, and Tyr-290 together coordinate L-glutamine. Residues His-330 and Glu-332 contribute to the active site.

This sequence belongs to the CarA family. Composed of two chains; the small (or glutamine) chain promotes the hydrolysis of glutamine to ammonia, which is used by the large (or ammonia) chain to synthesize carbamoyl phosphate. Tetramer of heterodimers (alpha,beta)4.

The catalysed reaction is hydrogencarbonate + L-glutamine + 2 ATP + H2O = carbamoyl phosphate + L-glutamate + 2 ADP + phosphate + 2 H(+). It catalyses the reaction L-glutamine + H2O = L-glutamate + NH4(+). Its pathway is amino-acid biosynthesis; L-arginine biosynthesis; carbamoyl phosphate from bicarbonate: step 1/1. The protein operates within pyrimidine metabolism; UMP biosynthesis via de novo pathway; (S)-dihydroorotate from bicarbonate: step 1/3. In terms of biological role, small subunit of the glutamine-dependent carbamoyl phosphate synthetase (CPSase). CPSase catalyzes the formation of carbamoyl phosphate from the ammonia moiety of glutamine, carbonate, and phosphate donated by ATP, constituting the first step of 2 biosynthetic pathways, one leading to arginine and/or urea and the other to pyrimidine nucleotides. The small subunit (glutamine amidotransferase) binds and cleaves glutamine to supply the large subunit with the substrate ammonia. In Bacillus cereus (strain ATCC 10987 / NRS 248), this protein is Carbamoyl phosphate synthase small chain.